The sequence spans 170 residues: Myosin regulatory light chain 11 (170 aa).

Ala-2 carries the n,N,N-trimethylalanine modification. Residues Ser-16 and Ser-17 each carry the phosphoserine modification. A phosphothreonine mark is found at Thr-26 and Thr-36. Positions 26 to 61 (TQIQEFKEAFTVIDQNRDGIIDKEDLRDTFAAMGRL) constitute an EF-hand 1 domain. Residues Asp-39, Asn-41, Asp-43, and Asp-50 each coordinate Ca(2+). Ser-76 is modified (phosphoserine). 2 consecutive EF-hand domains span residues 96-131 (DPED…QCDR) and 132-167 (FSQE…GDAK). Thr-102 carries the post-translational modification Phosphothreonine.

In terms of assembly, myosin is a hexamer of 2 heavy chains and 4 light chains. In terms of processing, n,N,N-trimethylalanine found in this myosin light chain would not have been detected in the N-terminal tryptic peptide in PubMed:863872 and PubMed:352892 because it would remain trimethylated and ninhydrin negative after hydrolysis.

In terms of biological role, myosin regulatory subunit that plays an essential role to maintain muscle integrity during early development. Plays a role in muscle contraction. The polypeptide is Myosin regulatory light chain 11 (MYL11) (Oryctolagus cuniculus (Rabbit)).